We begin with the raw amino-acid sequence, 212 residues long: Orotate phosphoribosyltransferase (212 aa).

Residues R95, K99, H101, and 121–129 each bind 5-phospho-alpha-D-ribose 1-diphosphate; that span reads DDLITTGGS. Orotate is bound at residue T125.

The protein belongs to the purine/pyrimidine phosphoribosyltransferase family. PyrE subfamily. As to quaternary structure, homodimer. It depends on Mg(2+) as a cofactor.

The catalysed reaction is orotidine 5'-phosphate + diphosphate = orotate + 5-phospho-alpha-D-ribose 1-diphosphate. It participates in pyrimidine metabolism; UMP biosynthesis via de novo pathway; UMP from orotate: step 1/2. In terms of biological role, catalyzes the transfer of a ribosyl phosphate group from 5-phosphoribose 1-diphosphate to orotate, leading to the formation of orotidine monophosphate (OMP). The polypeptide is Orotate phosphoribosyltransferase (Lactobacillus johnsonii (strain CNCM I-12250 / La1 / NCC 533)).